The sequence spans 446 residues: Glucose-6-phosphate isomerase (446 aa).

The Proton donor role is filled by glutamate 287. Active-site residues include histidine 308 and lysine 422.

The protein belongs to the GPI family.

The protein localises to the cytoplasm. The enzyme catalyses alpha-D-glucose 6-phosphate = beta-D-fructose 6-phosphate. The protein operates within carbohydrate biosynthesis; gluconeogenesis. Its pathway is carbohydrate degradation; glycolysis; D-glyceraldehyde 3-phosphate and glycerone phosphate from D-glucose: step 2/4. Its function is as follows. Catalyzes the reversible isomerization of glucose-6-phosphate to fructose-6-phosphate. The protein is Glucose-6-phosphate isomerase of Lactobacillus helveticus (strain DPC 4571).